The following is a 118-amino-acid chain: UPF0102 protein Arth_2474 (118 aa).

It belongs to the UPF0102 family.

The polypeptide is UPF0102 protein Arth_2474 (Arthrobacter sp. (strain FB24)).